Here is a 656-residue protein sequence, read N- to C-terminus: Ankyrin repeat and SAM domain-containing protein 3 (656 aa).

Residues 1-422 (MSELSDEASE…AESSPQTQRA (422 aa)) are interaction with NEK7. Phosphoserine occurs at positions 2 and 5. ANK repeat units follow at residues 34–64 (DVPLDLHTAASIGQYEVVKECVQRRELDLNK), 68–97 (GGWTPLMYASYIGHDTIVHLLLEAGVSVNV), 101–130 (EGQTPLMLASSCGNESIAYFLLQQGAELEM), 134–163 (QGWTALFHCTSAGHQHMVRFLLDSGANANV), 168–197 (CGFTPLMEAAAAGHEIIVQYFLNHGVKVDA), and 201–220 (SGATARMLAKQYGHMKIVAL). The residue at position 96 (N96) is a 3-hydroxyasparagine. Residues S201, S225, S243, S244, and S245 each carry the phosphoserine modification. Disordered regions lie at residues 235 to 265 (SPEKYEDLSSSDESCPAPQRQRPCRKKGVSI) and 277 to 312 (GIGLGGRAPRPRYEQAPPRGYVTFNSSGENPLEEEG). A Phosphothreonine modification is found at T319. S320, S368, S371, and S375 each carry phosphoserine. The tract at residues 346–425 (GPVQSSSSSE…SPQTQRAPYS (80 aa)) is disordered. Residues 425–488 (SGPQDLAALL…TSAIARWHSS (64 aa)) form the SAM domain. The stretch at 501 to 526 (ADRLEAEMQELAIQLHKRCEEVEATR) forms a coiled coil. The residue at position 541 (S541) is a Phosphoserine.

Homooligomer. Interacts (via SAM domain) with ANKS6 (via SAM domain). Interacts with BICC1. Interacts with NPHP1. Interacts with NEK8. Interacts with HIF1AN. Interacts with NEK7; this interaction alters the subcellular distribution of NEK7 by preventing its nuclear translocation. Post-translationally, hydroxylated at Asn-96, most probably by HIF1AN. Phosphorylations at Ser-5, Ser-225, Thr-319, Ser-320, Ser-368 and Ser-371 occur in a NEK7-dependent manner. In terms of processing, polyubiquitinated.

The protein resides in the cell projection. It localises to the cilium. It is found in the cytoplasm. May be involved in vasopressin signaling in the kidney. This Homo sapiens (Human) protein is Ankyrin repeat and SAM domain-containing protein 3 (ANKS3).